Reading from the N-terminus, the 509-residue chain is Inositol-3-phosphate synthase 1 (509 aa).

It belongs to the myo-inositol 1-phosphate synthase family. Requires NAD(+) as cofactor. Highly expressed in anthers, but transcripts are undetectable in roots, leaves, flowers and embryos.

It localises to the cytoplasm. It catalyses the reaction D-glucose 6-phosphate = 1D-myo-inositol 3-phosphate. It functions in the pathway polyol metabolism; myo-inositol biosynthesis; myo-inositol from D-glucose 6-phosphate: step 1/2. In terms of biological role, key enzyme in myo-inositol biosynthesis pathway that catalyzes the conversion of glucose 6-phosphate to 1-myo-inositol 1-phosphate in a NAD-dependent manner. Is a key enzyme in the phytic acid biosynthesis pathway in seeds. This chain is Inositol-3-phosphate synthase 1, found in Oryza sativa subsp. japonica (Rice).